A 338-amino-acid chain; its full sequence is Purple acid phosphatase 17 (338 aa).

An N-terminal signal peptide occupies residues 1-31; the sequence is MNSGRRSLMSATASLSLLLCIFTTFVVVSNG. Asp-53 contacts Fe cation. Asn-61 carries an N-linked (GlcNAc...) asparagine glycan. 2 residues coordinate Fe cation: Asp-86 and Tyr-89. Asp-86 is a binding site for Zn(2+). The Zn(2+) site is built by Asn-124 and His-218. His-227 (proton donor) is an active-site residue. His-253 lines the Zn(2+) pocket. Residue 253–255 coordinates substrate; the sequence is HDH. His-255 contacts Fe cation.

The protein belongs to the metallophosphoesterase superfamily. Purple acid phosphatase family. Homodimer. Fe cation serves as cofactor. It depends on Zn(2+) as a cofactor. As to expression, expressed in roots, stems, leaves, flowers and siliques.

Its subcellular location is the secreted. The enzyme catalyses a phosphate monoester + H2O = an alcohol + phosphate. It catalyses the reaction 2 a phenolic donor + H2O2 = 2 a phenolic radical donor + 2 H2O. Its activity is regulated as follows. Inhibited by phosphate and molybdate. Functionally, metallo-phosphoesterase involved in phosphate metabolism. Has a peroxidase activity. The polypeptide is Purple acid phosphatase 17 (PAP17) (Arabidopsis thaliana (Mouse-ear cress)).